We begin with the raw amino-acid sequence, 161 residues long: Cyclic pyranopterin monophosphate synthase (161 aa).

Substrate-binding positions include 75 to 77 (MCH) and 115 to 116 (ME). Asp-130 is an active-site residue.

Belongs to the MoaC family. In terms of assembly, homohexamer; trimer of dimers.

The catalysed reaction is (8S)-3',8-cyclo-7,8-dihydroguanosine 5'-triphosphate = cyclic pyranopterin phosphate + diphosphate. It functions in the pathway cofactor biosynthesis; molybdopterin biosynthesis. Its function is as follows. Catalyzes the conversion of (8S)-3',8-cyclo-7,8-dihydroguanosine 5'-triphosphate to cyclic pyranopterin monophosphate (cPMP). The protein is Cyclic pyranopterin monophosphate synthase of Bacillus cereus (strain ATCC 10987 / NRS 248).